The primary structure comprises 375 residues: Growth/differentiation factor 8 (375 aa).

Positions 1-23 (MQKLQLCVYIYLFMLIVAGPVDL) are cleaved as a signal peptide. Positions 24 to 266 (NENSEQKENV…VTDTPKRSRR (243 aa)) are excised as a propeptide. N-linked (GlcNAc...) asparagine glycosylation is present at asparagine 71. Intrachain disulfides connect cysteine 272–cysteine 282, cysteine 281–cysteine 340, cysteine 309–cysteine 372, and cysteine 313–cysteine 374.

This sequence belongs to the TGF-beta family. Homodimer; disulfide-linked. Interacts with WFIKKN2, leading to inhibit its activity. Interacts with FSTL3. Post-translationally, synthesized as large precursor molecule that undergoes proteolytic cleavage to generate an N-terminal propeptide and a disulfide linked C-terminal dimer, which is the biologically active molecule. The circulating form consists of a latent complex of the C-terminal dimer and other proteins, including its propeptide, which maintain the C-terminal dimer in a latent, inactive state. Ligand activation requires additional cleavage of the prodomain by a tolloid-like metalloproteinase.

Its subcellular location is the secreted. Acts specifically as a negative regulator of skeletal muscle growth. The sequence is that of Growth/differentiation factor 8 (MSTN) from Papio hamadryas (Hamadryas baboon).